A 519-amino-acid polypeptide reads, in one-letter code: Putative tyrosine carboxypeptidase MATCAP2 (519 aa).

The interval Ser-63–Ala-103 is disordered. A Zn(2+)-binding site is contributed by His-330. Residue Glu-331 is the Nucleophile of the active site. Zn(2+)-binding residues include His-335 and Glu-366.

The cofactor is Zn(2+).

Functionally, putative tyrosine carboxypeptidase. The sequence is that of Putative tyrosine carboxypeptidase MATCAP2 from Mus musculus (Mouse).